Reading from the N-terminus, the 196-residue chain is Glycerol-3-phosphate acyltransferase (196 aa).

The next 5 helical transmembrane spans lie at 1-21, 55-75, 81-101, 118-138, and 140-160; these read MIIFTATLIIILAYFLGSISG, IAIFVLLFDSLKGAVPIWLGT, PIYLYIIAISACIGHIYPIYF, AISINFFIIIIITWILTVYLF, and YASLGSIVTFIVITFYVWYIQ.

The protein belongs to the PlsY family. As to quaternary structure, probably interacts with PlsX.

Its subcellular location is the cell inner membrane. The catalysed reaction is an acyl phosphate + sn-glycerol 3-phosphate = a 1-acyl-sn-glycero-3-phosphate + phosphate. It participates in lipid metabolism; phospholipid metabolism. Catalyzes the transfer of an acyl group from acyl-phosphate (acyl-PO(4)) to glycerol-3-phosphate (G3P) to form lysophosphatidic acid (LPA). This enzyme utilizes acyl-phosphate as fatty acyl donor, but not acyl-CoA or acyl-ACP. The polypeptide is Glycerol-3-phosphate acyltransferase (Blochmanniella floridana).